Reading from the N-terminus, the 745-residue chain is uncharacterized protein (745 aa).

The 99-residue stretch at 158-256 (NQVCDYIELH…HQTPKQYRGD (99 aa)) folds into the HTH araC/xylS-type domain. DNA-binding regions (H-T-H motif) lie at residues 175 to 196 (SELSEYVGWSESHLSKKFAESL) and 223 to 246 (ITDIALQNGFSSAASFARTFKHIT).

This is an uncharacterized protein from Staphylococcus aureus.